The sequence spans 204 residues: Intraflagellar transport protein 27 (204 aa).

Residues 23 to 30, 75 to 79, and 136 to 139 contribute to the GTP site; these read GEATVGKS, DTAGS, and NKTD.

The protein belongs to the small GTPase superfamily. Rab family. As to quaternary structure, component of the IFT complex B, the core composed of IFT25, IFT27, IFT46, IFT52, IFT74, IFT81 and IFT88 as well as associated subunits IFT20, IFT57, IFT80 and IFT172. Interacts with IFT25; the interaction is direct.

It localises to the cell projection. It is found in the cilium. The protein resides in the flagellum. The protein localises to the cytoplasm. Its subcellular location is the cytoskeleton. It localises to the flagellum basal body. In terms of biological role, small GTPase-like component of the intraflagellar transport (IFT) complex B. Forms a subcomplex within the IFT complex B with IFT25. Has very low GTPase activity either because it lacks the conserved catalytic Gln in position 79 or because it requires some GTPase-activating protein (GAP) for GTP turnover. The protein is Intraflagellar transport protein 27 (IFT27) of Chlamydomonas reinhardtii (Chlamydomonas smithii).